A 366-amino-acid polypeptide reads, in one-letter code: NAD(P)H-quinone oxidoreductase subunit 1, chloroplastic (366 aa).

A run of 8 helical transmembrane segments spans residues 29-49 (WITASILILVSGVVIGVLVIV), 97-117 (LLFSIGPAIVVIPVLLSYLVI), 130-150 (IGVFFWIAVSSIAPLGLFMAG), 166-186 (VAQAISYEIPLALCVLSISLL), 202-222 (FGFWGWNVWRQPIGFIAFLIA), 254-274 (FGLFYVASYLNLLVSSLFVTV), 307-327 (VIIGIIITLAKAYSFLFISIV), and 340-360 (LLNLGWKFLLPIALGNLLLTA).

This sequence belongs to the complex I subunit 1 family. As to quaternary structure, NDH is composed of at least 16 different subunits, 5 of which are encoded in the nucleus.

It is found in the plastid. It localises to the chloroplast thylakoid membrane. It carries out the reaction a plastoquinone + NADH + (n+1) H(+)(in) = a plastoquinol + NAD(+) + n H(+)(out). It catalyses the reaction a plastoquinone + NADPH + (n+1) H(+)(in) = a plastoquinol + NADP(+) + n H(+)(out). In terms of biological role, NDH shuttles electrons from NAD(P)H:plastoquinone, via FMN and iron-sulfur (Fe-S) centers, to quinones in the photosynthetic chain and possibly in a chloroplast respiratory chain. The immediate electron acceptor for the enzyme in this species is believed to be plastoquinone. Couples the redox reaction to proton translocation, and thus conserves the redox energy in a proton gradient. The protein is NAD(P)H-quinone oxidoreductase subunit 1, chloroplastic of Anthoceros angustus (Hornwort).